A 619-amino-acid chain; its full sequence is Eukaryotic translation initiation factor 3 subunit D (619 aa).

The segment at 99–160 (QKQPHQRGRF…KWGARPPPKI (62 aa)) is disordered. The span at 100-121 (KQPHQRGRFRGNLRNQRGRGRG) shows a compositional bias: basic residues. The tract at residues 288 to 302 (EFDLLTVNETAIEPP) is RNA gate. A disordered region spans residues 588 to 619 (TPAATETVATATTEATTPTTATKTTAPAAAQK).

The protein belongs to the eIF-3 subunit D family. Component of the eukaryotic translation initiation factor 3 (eIF-3) complex.

The protein resides in the cytoplasm. MRNA cap-binding component of the eukaryotic translation initiation factor 3 (eIF-3) complex, which is involved in protein synthesis of a specialized repertoire of mRNAs and, together with other initiation factors, stimulates binding of mRNA and methionyl-tRNAi to the 40S ribosome. The eIF-3 complex specifically targets and initiates translation of a subset of mRNAs involved in cell proliferation. In the eIF-3 complex, eif3d specifically recognizes and binds the 7-methylguanosine cap of a subset of mRNAs. The chain is Eukaryotic translation initiation factor 3 subunit D from Aedes aegypti (Yellowfever mosquito).